Here is a 186-residue protein sequence, read N- to C-terminus: Putative inactive recombination-promoting nuclease-like protein YjiQ (186 aa).

The protein belongs to the Rpn/YhgA-like nuclease family.

Functionally, this pseudogene is the C-terminal fragment of low activity DNA endonuclease RpnD which probably yields 3'-hydroxyl ends. The intact protein can be seen in this entry (AC B7NGZ6). Expression of the repaired protein increases the frequency of recA-independent recombination, but also decreases viability probably via DNA damage; in a RecA strain expression has no effect on viability but does induce the SOS repair response. May play a role in horizontal gene transfer. The sequence is that of Putative inactive recombination-promoting nuclease-like protein YjiQ (yjiQ) from Escherichia coli (strain K12).